A 231-amino-acid polypeptide reads, in one-letter code: Large ribosomal subunit protein uL1 (231 aa).

It belongs to the universal ribosomal protein uL1 family. Part of the 50S ribosomal subunit.

Functionally, binds directly to 23S rRNA. The L1 stalk is quite mobile in the ribosome, and is involved in E site tRNA release. In terms of biological role, protein L1 is also a translational repressor protein, it controls the translation of the L11 operon by binding to its mRNA. This Pseudomonas savastanoi pv. phaseolicola (strain 1448A / Race 6) (Pseudomonas syringae pv. phaseolicola (strain 1448A / Race 6)) protein is Large ribosomal subunit protein uL1.